A 397-amino-acid polypeptide reads, in one-letter code: Phosphoglycerate kinase (397 aa).

Residues 25 to 27 (DLN), Arg-41, 64 to 67 (HLGR), Arg-118, and Arg-151 each bind substrate. Residues Lys-202, Glu-324, and 350 to 353 (GGDT) each bind ATP.

It belongs to the phosphoglycerate kinase family. In terms of assembly, monomer.

It is found in the cytoplasm. It carries out the reaction (2R)-3-phosphoglycerate + ATP = (2R)-3-phospho-glyceroyl phosphate + ADP. Its pathway is carbohydrate degradation; glycolysis; pyruvate from D-glyceraldehyde 3-phosphate: step 2/5. In Janthinobacterium sp. (strain Marseille) (Minibacterium massiliensis), this protein is Phosphoglycerate kinase.